The chain runs to 160 residues: 2-C-methyl-D-erythritol 2,4-cyclodiphosphate synthase (160 aa).

Residues D10 and H12 each coordinate a divalent metal cation. 4-CDP-2-C-methyl-D-erythritol 2-phosphate is bound by residues 10–12 (DVH) and 36–37 (HS). Position 44 (H44) interacts with a divalent metal cation. 4-CDP-2-C-methyl-D-erythritol 2-phosphate-binding positions include 58-60 (DIG), 134-137 (TTTE), F141, and R144.

This sequence belongs to the IspF family. In terms of assembly, homotrimer. It depends on a divalent metal cation as a cofactor.

It carries out the reaction 4-CDP-2-C-methyl-D-erythritol 2-phosphate = 2-C-methyl-D-erythritol 2,4-cyclic diphosphate + CMP. The protein operates within isoprenoid biosynthesis; isopentenyl diphosphate biosynthesis via DXP pathway; isopentenyl diphosphate from 1-deoxy-D-xylulose 5-phosphate: step 4/6. Its function is as follows. Involved in the biosynthesis of isopentenyl diphosphate (IPP) and dimethylallyl diphosphate (DMAPP), two major building blocks of isoprenoid compounds. Catalyzes the conversion of 4-diphosphocytidyl-2-C-methyl-D-erythritol 2-phosphate (CDP-ME2P) to 2-C-methyl-D-erythritol 2,4-cyclodiphosphate (ME-CPP) with a corresponding release of cytidine 5-monophosphate (CMP). The protein is 2-C-methyl-D-erythritol 2,4-cyclodiphosphate synthase of Phocaeicola vulgatus (strain ATCC 8482 / DSM 1447 / JCM 5826 / CCUG 4940 / NBRC 14291 / NCTC 11154) (Bacteroides vulgatus).